The sequence spans 573 residues: Proline--tRNA ligase (573 aa).

This sequence belongs to the class-II aminoacyl-tRNA synthetase family. ProS type 1 subfamily. In terms of assembly, homodimer.

It is found in the cytoplasm. The enzyme catalyses tRNA(Pro) + L-proline + ATP = L-prolyl-tRNA(Pro) + AMP + diphosphate. Functionally, catalyzes the attachment of proline to tRNA(Pro) in a two-step reaction: proline is first activated by ATP to form Pro-AMP and then transferred to the acceptor end of tRNA(Pro). As ProRS can inadvertently accommodate and process non-cognate amino acids such as alanine and cysteine, to avoid such errors it has two additional distinct editing activities against alanine. One activity is designated as 'pretransfer' editing and involves the tRNA(Pro)-independent hydrolysis of activated Ala-AMP. The other activity is designated 'posttransfer' editing and involves deacylation of mischarged Ala-tRNA(Pro). The misacylated Cys-tRNA(Pro) is not edited by ProRS. The chain is Proline--tRNA ligase from Cupriavidus taiwanensis (strain DSM 17343 / BCRC 17206 / CCUG 44338 / CIP 107171 / LMG 19424 / R1) (Ralstonia taiwanensis (strain LMG 19424)).